The sequence spans 631 residues: 1-deoxy-D-xylulose-5-phosphate synthase (631 aa).

Thiamine diphosphate-binding positions include histidine 73, 113 to 115, asparagine 174, tyrosine 285, and glutamate 367; that span reads SHA. Residue asparagine 174 coordinates Mg(2+).

The protein belongs to the transketolase family. DXPS subfamily. As to quaternary structure, homodimer. Requires Mg(2+) as cofactor. Thiamine diphosphate serves as cofactor.

It carries out the reaction D-glyceraldehyde 3-phosphate + pyruvate + H(+) = 1-deoxy-D-xylulose 5-phosphate + CO2. It functions in the pathway metabolic intermediate biosynthesis; 1-deoxy-D-xylulose 5-phosphate biosynthesis; 1-deoxy-D-xylulose 5-phosphate from D-glyceraldehyde 3-phosphate and pyruvate: step 1/1. Functionally, catalyzes the acyloin condensation reaction between C atoms 2 and 3 of pyruvate and glyceraldehyde 3-phosphate to yield 1-deoxy-D-xylulose-5-phosphate (DXP). The polypeptide is 1-deoxy-D-xylulose-5-phosphate synthase (Streptomyces sp. (strain CL190)).